We begin with the raw amino-acid sequence, 312 residues long: Olfactory receptor 8K3 (312 aa).

Residues 1-25 (MEQHNLTTVNEFILTGITDIAELQA) lie on the Extracellular side of the membrane. The N-linked (GlcNAc...) asparagine glycan is linked to Asn5. A helical transmembrane segment spans residues 26 to 46 (PLFALFLMIYVISVMGNLGMI). Residues 47 to 54 (VLTKLDSR) lie on the Cytoplasmic side of the membrane. Residues 55–75 (LQTPMYFFLRHLAFMDLGYST) form a helical membrane-spanning segment. At 76–99 (TVGPKMLVNFVVDKNIISYYFCAT) the chain is on the extracellular side. Residues Cys97 and Cys189 are joined by a disulfide bond. The chain crosses the membrane as a helical span at residues 100-120 (QLAFFLVFIGSELFILSAMSY). The Cytoplasmic portion of the chain corresponds to 121–139 (DLYVAICNPLLYTVIMSRR). Residues 140–160 (VCQVLVAIPYLYCTFISLLVT) traverse the membrane as a helical segment. The Extracellular segment spans residues 161-197 (IKIFTLSFCGYNVISHFYCDSLPLLPLLCSNTHEIEL). The helical transmembrane segment at 198–217 (IILIFAAIDLISSLLIVLLS) threads the bilayer. Topologically, residues 218-236 (YLLILVAILRMNSAGRQKA) are cytoplasmic. The chain crosses the membrane as a helical span at residues 237-257 (FSTCGAHLTVVIVFYGTLLFM). The Extracellular portion of the chain corresponds to 258–270 (YVQPKSSHSFDTD). Residues 271 to 291 (KVASIFYTLVIPMLNPLIYSL) traverse the membrane as a helical segment. Residues 292 to 312 (RNKDVKYALRRTWNNLCNIFV) lie on the Cytoplasmic side of the membrane.

This sequence belongs to the G-protein coupled receptor 1 family.

The protein localises to the cell membrane. Its function is as follows. Odorant receptor. This is Olfactory receptor 8K3 (OR8K3) from Homo sapiens (Human).